Consider the following 209-residue polypeptide: MVQFVTIPNLTDYQVTLKLMQNYVNKVINVNEPEIVYLVEHSEVYTAGTNYKQEELLNYSDIPVIYTGRGGKFTFHGPGQRVIYPILNLASPNRSKDLKLYIKMLEEWIINSLNYFGIKAYLIKDKVGIWVKVRKDEFAKIAAIGIRVRKWVTYHGVAINISTDLSKFGGIIPCGLENSLVTSLNQLGVHIEMSEFDKIIQTEFNKIFT.

One can recognise a BPL/LPL catalytic domain in the interval 30–209 (VNEPEIVYLV…IQTEFNKIFT (180 aa)). Residues 69–76 (RGGKFTFH), 143–145 (AIG), and 156–158 (GVA) contribute to the substrate site. C174 (acyl-thioester intermediate) is an active-site residue.

Belongs to the LipB family.

Its subcellular location is the cytoplasm. The catalysed reaction is octanoyl-[ACP] + L-lysyl-[protein] = N(6)-octanoyl-L-lysyl-[protein] + holo-[ACP] + H(+). It functions in the pathway protein modification; protein lipoylation via endogenous pathway; protein N(6)-(lipoyl)lysine from octanoyl-[acyl-carrier-protein]: step 1/2. Its function is as follows. Catalyzes the transfer of endogenously produced octanoic acid from octanoyl-acyl-carrier-protein onto the lipoyl domains of lipoate-dependent enzymes. Lipoyl-ACP can also act as a substrate although octanoyl-ACP is likely to be the physiological substrate. The protein is Octanoyltransferase of Rickettsia canadensis (strain McKiel).